Consider the following 181-residue polypeptide: Oligoribonuclease (181 aa).

The region spanning 8 to 171 is the Exonuclease domain; that stretch reads LIWLDLEMTG…DDIKESIAEL (164 aa). Y129 is an active-site residue.

The protein belongs to the oligoribonuclease family.

It localises to the cytoplasm. Functionally, 3'-to-5' exoribonuclease specific for small oligoribonucleotides. This Colwellia psychrerythraea (strain 34H / ATCC BAA-681) (Vibrio psychroerythus) protein is Oligoribonuclease.